The following is a 225-amino-acid chain: 3-dehydroquinate dehydratase (225 aa).

Residues serine 6, 30–32 (EWR), and arginine 62 each bind 3-dehydroquinate. Histidine 118 serves as the catalytic Proton donor/acceptor. Catalysis depends on lysine 143, which acts as the Schiff-base intermediate with substrate. Positions 186, 205, and 209 each coordinate 3-dehydroquinate.

The protein belongs to the type-I 3-dehydroquinase family. As to quaternary structure, homodimer.

It catalyses the reaction 3-dehydroquinate = 3-dehydroshikimate + H2O. It functions in the pathway metabolic intermediate biosynthesis; chorismate biosynthesis; chorismate from D-erythrose 4-phosphate and phosphoenolpyruvate: step 3/7. Involved in the third step of the chorismate pathway, which leads to the biosynthesis of aromatic amino acids. Catalyzes the cis-dehydration of 3-dehydroquinate (DHQ) and introduces the first double bond of the aromatic ring to yield 3-dehydroshikimate. In Streptococcus pneumoniae (strain Hungary19A-6), this protein is 3-dehydroquinate dehydratase.